The primary structure comprises 589 residues: Phenylalanine--tRNA ligase beta subunit (589 aa).

Positions 302–379 constitute a B5 domain; it reads LPYRKEMVRA…IAYGYNNIQM (78 aa). Mg(2+) is bound by residues Asp357, Asp363, Glu366, and Asp367.

Belongs to the phenylalanyl-tRNA synthetase beta subunit family. Type 2 subfamily. In terms of assembly, heterotetramer; dimer of two heterodimers formed by FARSA and FARSB. The cofactor is Mg(2+).

It is found in the cytoplasm. It carries out the reaction tRNA(Phe) + L-phenylalanine + ATP = L-phenylalanyl-tRNA(Phe) + AMP + diphosphate + H(+). The chain is Phenylalanine--tRNA ligase beta subunit (Farsb) from Mus musculus (Mouse).